Here is an 80-residue protein sequence, read N- to C-terminus: Large ribosomal subunit protein bL31 (80 aa).

Residues Cys16, Cys18, Cys38, and Cys41 each coordinate Zn(2+).

Belongs to the bacterial ribosomal protein bL31 family. Type A subfamily. In terms of assembly, part of the 50S ribosomal subunit. The cofactor is Zn(2+).

Binds the 23S rRNA. The chain is Large ribosomal subunit protein bL31 from Mycobacterium avium (strain 104).